We begin with the raw amino-acid sequence, 278 residues long: Phosphatidylglycerol--prolipoprotein diacylglyceryl transferase (278 aa).

4 helical membrane passes run 12-32 (FGPL…LIGL), 44-64 (LENG…VIGA), 86-106 (IWEG…TLIL), and 113-133 (QPFL…QAIG). Arginine 134 is a binding site for a 1,2-diacyl-sn-glycero-3-phospho-(1'-sn-glycerol). Transmembrane regions (helical) follow at residues 173–193 (PTFL…LVLF), 203–223 (FPAG…RIWI), and 246–266 (IAQL…WWLK).

The protein belongs to the Lgt family.

It localises to the cell inner membrane. The catalysed reaction is L-cysteinyl-[prolipoprotein] + a 1,2-diacyl-sn-glycero-3-phospho-(1'-sn-glycerol) = an S-1,2-diacyl-sn-glyceryl-L-cysteinyl-[prolipoprotein] + sn-glycerol 1-phosphate + H(+). Its pathway is protein modification; lipoprotein biosynthesis (diacylglyceryl transfer). Its function is as follows. Catalyzes the transfer of the diacylglyceryl group from phosphatidylglycerol to the sulfhydryl group of the N-terminal cysteine of a prolipoprotein, the first step in the formation of mature lipoproteins. This Parasynechococcus marenigrum (strain WH8102) protein is Phosphatidylglycerol--prolipoprotein diacylglyceryl transferase.